A 310-amino-acid chain; its full sequence is Vomeronasal type-1 receptor 90 (310 aa).

Over 1 to 20 (MRRISTLYGVVDKQAIFFSE) the chain is Extracellular. The chain crosses the membrane as a helical span at residues 21-41 (VVIGISFNSILFLFHIFQFLL). Topologically, residues 42–46 (ERRLR) are cytoplasmic. A helical transmembrane segment spans residues 47–67 (ITDLIISLLALIHLGMLTVMG). At 68–93 (FRAVDIFASQNVWNDIKCKSLAHLHR) the chain is on the extracellular side. Cys-85 and Cys-172 are disulfide-bonded. Residues 94-114 (LLRGLSLCATCLLSIFQAITL) traverse the membrane as a helical segment. Residues 115 to 135 (SPRSSCLAKFKYKSTQHSLCS) are Cytoplasmic-facing. A helical membrane pass occupies residues 136-156 (LLVLWAFYMSCGTHYSFTIVA). The Extracellular portion of the chain corresponds to 157 to 183 (DYNFSSRSLIFVTESCIILPMDYITRH). Asn-159 carries an N-linked (GlcNAc...) asparagine glycan. The helical transmembrane segment at 184 to 204 (LFFILGIFRDVSFIGLMALSS) threads the bilayer. Over 205 to 238 (GYMVALLCRHRKQAQHLHRTSLSPKASPEQRATR) the chain is Cytoplasmic. A helical membrane pass occupies residues 239 to 259 (TILLLMSFFVLMYCLDCTISA). The Extracellular segment spans residues 260-271 (SRLMHNGEPIHH). A helical membrane pass occupies residues 272–292 (SIQMMVSNSYATLSPLLLIVT). Topologically, residues 293 to 310 (ENRISRFLKSLLGRTVDA) are cytoplasmic.

It belongs to the G-protein coupled receptor 1 family. As to expression, expressed in 1-4% of neurons of the vomeronasal organ. Only one pheromone receptor gene may be expressed in a particular neuron. Not expressed in the main olfactory epithelium.

The protein resides in the cell membrane. Functionally, putative pheromone receptor implicated in the regulation of social as well as reproductive behavior. This Rattus norvegicus (Rat) protein is Vomeronasal type-1 receptor 90 (Vom1r90).